The sequence spans 276 residues: D-apionate oxidoisomerase (276 aa).

Residues 12-14 (GKM), Glu-33, and Asp-69 contribute to the NAD(+) site. 2 residues coordinate Zn(2+): His-114 and Glu-184.

It belongs to the ApnO family. Zn(2+) serves as cofactor.

It carries out the reaction D-apionate + NAD(+) = 3-oxoisoapionate + NADH + H(+). Its pathway is carbohydrate metabolism. In terms of biological role, involved in catabolism of D-apiose. Catalyzes the conversion of D-apionate to 3-oxo-isoapionate. This Cupriavidus necator (strain ATCC 43291 / DSM 13513 / CCUG 52238 / LMG 8453 / N-1) (Ralstonia eutropha) protein is D-apionate oxidoisomerase.